A 235-amino-acid polypeptide reads, in one-letter code: Probable carboxylesterase Os04g0669600 (235 aa).

Residues Ser-113, Asp-167, and His-199 each act as charge relay system in the active site.

Belongs to the AB hydrolase superfamily. AB hydrolase 2 family.

Its function is as follows. Possesses carboxylesterase activity in vitro. In Oryza sativa subsp. japonica (Rice), this protein is Probable carboxylesterase Os04g0669600.